A 126-amino-acid polypeptide reads, in one-letter code: Glycine cleavage system H protein (126 aa).

A Lipoyl-binding domain is found at 23-105 (AATVGITDHA…YGEGWLLRVR (83 aa)). Residue Lys64 is modified to N6-lipoyllysine.

The protein belongs to the GcvH family. The glycine cleavage system is composed of four proteins: P, T, L and H. The cofactor is (R)-lipoate.

Functionally, the glycine cleavage system catalyzes the degradation of glycine. The H protein shuttles the methylamine group of glycine from the P protein to the T protein. In Rubrobacter xylanophilus (strain DSM 9941 / JCM 11954 / NBRC 16129 / PRD-1), this protein is Glycine cleavage system H protein.